A 316-amino-acid chain; its full sequence is Cation efflux system protein CzcD (316 aa).

Transmembrane regions (helical) follow at residues leucine 17–methionine 37, alanine 47–alanine 67, phenylalanine 82–leucine 102, isoleucine 115–methionine 135, tyrosine 152–isoleucine 172, and phenylalanine 174–proline 194.

This sequence belongs to the cation diffusion facilitator (CDF) transporter (TC 2.A.4) family. SLC30A subfamily.

It localises to the cell membrane. Necessary for activation of the czc determinant. The sequence is that of Cation efflux system protein CzcD (czcD) from Alcaligenes sp. (strain CT14).